The primary structure comprises 116 residues: DNA-binding protein Tpen_0471 (116 aa).

It belongs to the PDCD5 family.

The polypeptide is DNA-binding protein Tpen_0471 (Thermofilum pendens (strain DSM 2475 / Hrk 5)).